The sequence spans 333 residues: HTH-type transcriptional regulator pepR1 (333 aa).

An HTH lacI-type domain is found at 6 to 60 (VTIYDVAREAKVSMATVSRVVNGNNNVRKETRDRVMEVIKRLHYQPNAVAQGLAS). The segment at residues 8–27 (IYDVAREAKVSMATVSRVVN) is a DNA-binding region (H-T-H motif).

Transcriptional regulator of the pepQ gene for prolidase. The sequence is that of HTH-type transcriptional regulator pepR1 (pepR1) from Lactobacillus delbrueckii subsp. lactis.